The chain runs to 218 residues: Superoxide dismutase [Mn] 2, mitochondrial (218 aa).

The transit peptide at methionine 1–serine 24 directs the protein to the mitochondrion. Mn(2+) contacts are provided by histidine 50, histidine 98, aspartate 179, and histidine 183.

Belongs to the iron/manganese superoxide dismutase family. In terms of assembly, homotetramer. The cofactor is Mn(2+). In terms of tissue distribution, expressed in pharynx and rectum. Upon thermal stress, expressed in vulva, body wall muscles and hypodermis.

The protein localises to the mitochondrion. The catalysed reaction is 2 superoxide + 2 H(+) = H2O2 + O2. In terms of biological role, destroys superoxide anion radicals which are normally produced within the cells and which are toxic to biological systems. The polypeptide is Superoxide dismutase [Mn] 2, mitochondrial (sod-3) (Caenorhabditis elegans).